The sequence spans 285 residues: Isoprenyl transferase 2 (285 aa).

Positions 11–30 (RREYRAPEPHPSGARAPKLP) are disordered. D43 is an active-site residue. Residue D43 participates in Mg(2+) binding. Residues 44 to 47 (GNGR), W48, R56, H60, and 88 to 90 (STE) contribute to the substrate site. Catalysis depends on N91, which acts as the Proton acceptor. Substrate contacts are provided by residues W92, R94, R211, and 217 to 219 (RTS). Position 230 (E230) interacts with Mg(2+).

It belongs to the UPP synthase family. As to quaternary structure, homodimer. Mg(2+) is required as a cofactor.

In terms of biological role, catalyzes the condensation of isopentenyl diphosphate (IPP) with allylic pyrophosphates generating different type of terpenoids. The protein is Isoprenyl transferase 2 of Streptomyces avermitilis (strain ATCC 31267 / DSM 46492 / JCM 5070 / NBRC 14893 / NCIMB 12804 / NRRL 8165 / MA-4680).